A 35-amino-acid polypeptide reads, in one-letter code: Thrombin-like enzyme cerastobin (35 aa).

The Peptidase S1 domain maps to 1–35 (VIGGAKCNINEHRSIVLLYSSRLFGHTLINKEWVL).

The protein belongs to the peptidase S1 family. Snake venom subfamily. Monomer. In terms of tissue distribution, expressed by the venom gland.

The protein resides in the secreted. With respect to regulation, inhibited by diisopropylfluorophosphate (DFP). Its function is as follows. Thrombin-like snake venom serine protease, that cleaves both alpha-chain (FGA) and beta-chain (FGB) of fibrinogen. Partially degrades factor X (F10), and release bradykinin from kininogen (KNG). Potently induces platelet aggregation. Shows a proteolytic activity towards protein constituents of the platelets cytoskeleton. Hydrolyzes actin, actin-binding protein, and P235. Shows a preferential cleavage at Arg-|-Xaa bonds. In Cerastes vipera (Sahara sand viper), this protein is Thrombin-like enzyme cerastobin.